A 505-amino-acid polypeptide reads, in one-letter code: Flagellin (505 aa).

The protein belongs to the bacterial flagellin family.

The protein resides in the secreted. It is found in the bacterial flagellum. In terms of biological role, flagellin is the subunit protein which polymerizes to form the filaments of bacterial flagella. The protein is Flagellin (fliC) of Salmonella senftenberg.